A 375-amino-acid polypeptide reads, in one-letter code: MKSLITPIAAGLLLAFSQYSLAADTGGYTKTDGGDVSGAVKKTASSMQDIVNIIEAAKVDANGKKVKGGAYPLVITYTGNEDSLINAAAANICGQWSKDARGVEIKDFTKGLTIIGANGSSANFGIWIVNSSDIVVRNMRIGYLPGGAQDGDMFRIDNSPNVWLDHNELFAANHECDGTKDGDTTFESAIDIKKGATYVTISYNYIHGVKKVGLSGFSSSDTAERNITYHHNIYSDVNARLPLQRGGNVHAYNNLYTGITSSGLNVRQNGKALIENNWFENAVSPVTSRYDGSNFGTWVLKGNNITKPADFATYNITWTPDTKEYRNADTWTSTGTYPTVPYSYSPVSAQCVKDKLANYAGVGKNLATLASSACK.

An N-terminal signal peptide occupies residues 1–22; it reads MKSLITPIAAGLLLAFSQYSLA. A disulfide bridge links cysteine 93 with cysteine 176. The Ca(2+) site is built by aspartate 150, aspartate 152, glutamate 187, and aspartate 191. Arginine 240 is a catalytic residue. Cysteine 351 and cysteine 374 are joined by a disulfide.

Belongs to the polysaccharide lyase 1 family. PLADES subfamily. Ca(2+) is required as a cofactor.

It is found in the secreted. The catalysed reaction is Eliminative cleavage of (1-&gt;4)-alpha-D-galacturonan to give oligosaccharides with 4-deoxy-alpha-D-galact-4-enuronosyl groups at their non-reducing ends.. It functions in the pathway glycan metabolism; pectin degradation; 2-dehydro-3-deoxy-D-gluconate from pectin: step 2/5. Involved in maceration and soft-rotting of plant tissue. This chain is Pectate lyase B (pelB), found in Dickeya chrysanthemi (Pectobacterium chrysanthemi).